We begin with the raw amino-acid sequence, 92 residues long: Kinetoplastid membrane protein 11C (92 aa).

The protein belongs to the KMP-11 family. In terms of assembly, monomer.

Its subcellular location is the cytoplasm. It is found in the cytoskeleton. The protein resides in the cell projection. It localises to the cilium. The protein localises to the flagellum. May be involved in the regulation of the cytoskeleton through interaction with the subpellicular microtubules. May be involved in parasite mobility and attachment to the surface of the host cell. Behaves as a strong immunogen during infection. The protein is Kinetoplastid membrane protein 11C (KMP-11C) of Leishmania infantum.